The following is a 301-amino-acid chain: 33 kDa chaperonin (301 aa).

Intrachain disulfides connect Cys240–Cys242 and Cys273–Cys276.

Belongs to the HSP33 family. Post-translationally, under oxidizing conditions two disulfide bonds are formed involving the reactive cysteines. Under reducing conditions zinc is bound to the reactive cysteines and the protein is inactive.

It localises to the cytoplasm. In terms of biological role, redox regulated molecular chaperone. Protects both thermally unfolding and oxidatively damaged proteins from irreversible aggregation. Plays an important role in the bacterial defense system toward oxidative stress. The polypeptide is 33 kDa chaperonin (Rippkaea orientalis (strain PCC 8801 / RF-1) (Cyanothece sp. (strain PCC 8801))).